The following is a 162-amino-acid chain: Regulator of sigma D (162 aa).

It belongs to the Rsd/AlgQ family. As to quaternary structure, interacts with RpoD.

The protein localises to the cytoplasm. Binds RpoD and negatively regulates RpoD-mediated transcription activation by preventing the interaction between the primary sigma factor RpoD with the catalytic core of the RNA polymerase and with promoter DNA. May be involved in replacement of the RNA polymerase sigma subunit from RpoD to RpoS during the transition from exponential growth to the stationary phase. The polypeptide is Regulator of sigma D (Salmonella paratyphi A (strain ATCC 9150 / SARB42)).